The chain runs to 156 residues: Cyclic pyranopterin monophosphate synthase (156 aa).

Substrate-binding positions include 75–77 (LCH) and 111–112 (ME). Residue aspartate 126 is part of the active site.

Belongs to the MoaC family. As to quaternary structure, homohexamer; trimer of dimers.

The enzyme catalyses (8S)-3',8-cyclo-7,8-dihydroguanosine 5'-triphosphate = cyclic pyranopterin phosphate + diphosphate. Its pathway is cofactor biosynthesis; molybdopterin biosynthesis. Catalyzes the conversion of (8S)-3',8-cyclo-7,8-dihydroguanosine 5'-triphosphate to cyclic pyranopterin monophosphate (cPMP). The polypeptide is Cyclic pyranopterin monophosphate synthase (Erythrobacter litoralis (strain HTCC2594)).